A 704-amino-acid chain; its full sequence is Elongation factor G (704 aa).

In terms of domain architecture, tr-type G spans 9–285 (AKVRNIGIMA…AIVAYLPSPL (277 aa)). GTP contacts are provided by residues 18–25 (AHIDAGKT), 82–86 (DTPGH), and 136–139 (NKMD).

The protein belongs to the TRAFAC class translation factor GTPase superfamily. Classic translation factor GTPase family. EF-G/EF-2 subfamily.

It localises to the cytoplasm. Functionally, catalyzes the GTP-dependent ribosomal translocation step during translation elongation. During this step, the ribosome changes from the pre-translocational (PRE) to the post-translocational (POST) state as the newly formed A-site-bound peptidyl-tRNA and P-site-bound deacylated tRNA move to the P and E sites, respectively. Catalyzes the coordinated movement of the two tRNA molecules, the mRNA and conformational changes in the ribosome. This Thermobifida fusca (strain YX) protein is Elongation factor G.